A 251-amino-acid polypeptide reads, in one-letter code: Mlc titration factor A (251 aa).

Residues His-111, His-148, His-152, and Glu-211 each coordinate Zn(2+).

This sequence belongs to the MtfA family. As to quaternary structure, interacts with Mlc. The cofactor is Zn(2+).

The protein resides in the cytoplasm. Functionally, involved in the modulation of the activity of the glucose-phosphotransferase system (glucose-PTS). Interacts with the transcriptional repressor Mlc, preventing its interaction with DNA and leading to the modulation of expression of genes regulated by Mlc, including ptsG, which encodes the PTS system glucose-specific EIICB component. In terms of biological role, shows zinc-dependent metallopeptidase activity. This chain is Mlc titration factor A, found in Salmonella arizonae (strain ATCC BAA-731 / CDC346-86 / RSK2980).